The following is a 443-amino-acid chain: Xaa-Pro dipeptidase (443 aa).

5 residues coordinate Mn(2+): Asp-246, Asp-257, His-339, Glu-384, and Glu-423.

The protein belongs to the peptidase M24B family. Bacterial-type prolidase subfamily. Mn(2+) serves as cofactor.

It catalyses the reaction Xaa-L-Pro dipeptide + H2O = an L-alpha-amino acid + L-proline. In terms of biological role, splits dipeptides with a prolyl residue in the C-terminal position. The chain is Xaa-Pro dipeptidase from Citrobacter koseri (strain ATCC BAA-895 / CDC 4225-83 / SGSC4696).